The primary structure comprises 302 residues: 33 kDa chaperonin (302 aa).

Intrachain disulfides connect Cys234/Cys236 and Cys267/Cys270.

The protein belongs to the HSP33 family. Under oxidizing conditions two disulfide bonds are formed involving the reactive cysteines. Under reducing conditions zinc is bound to the reactive cysteines and the protein is inactive.

The protein localises to the cytoplasm. Functionally, redox regulated molecular chaperone. Protects both thermally unfolding and oxidatively damaged proteins from irreversible aggregation. Plays an important role in the bacterial defense system toward oxidative stress. The polypeptide is 33 kDa chaperonin (Neisseria gonorrhoeae (strain ATCC 700825 / FA 1090)).